Here is a 201-residue protein sequence, read N- to C-terminus: Small ribosomal subunit protein uS4c (201 aa).

Positions 17–36 (ALPGLTRKTPKSGSNLKKKF) are disordered. The region spanning 89-157 (MRLDNILFRL…VQNYIASSDP (69 aa)) is the S4 RNA-binding domain.

It belongs to the universal ribosomal protein uS4 family. In terms of assembly, part of the 30S ribosomal subunit. Contacts protein S5. The interaction surface between S4 and S5 is involved in control of translational fidelity.

Its subcellular location is the plastid. It is found in the chloroplast. In terms of biological role, one of the primary rRNA binding proteins, it binds directly to 16S rRNA where it nucleates assembly of the body of the 30S subunit. With S5 and S12 plays an important role in translational accuracy. The protein is Small ribosomal subunit protein uS4c (rps4) of Agrostis stolonifera (Creeping bentgrass).